We begin with the raw amino-acid sequence, 136 residues long: Protein NrdI (136 aa).

This sequence belongs to the NrdI family.

Functionally, probably involved in ribonucleotide reductase function. The polypeptide is Protein NrdI (Salmonella agona (strain SL483)).